Reading from the N-terminus, the 534-residue chain is EH domain-containing protein 1 (534 aa).

Position 1 is an N-acetylmethionine (M1). One can recognise a Dynamin-type G domain in the interval F55–P286. The G1 motif stretch occupies residues G65–T72. Position 65–72 (G65–T72) interacts with ATP. Residues E91–P92 are G2 motif. Positions D153–G156 are G3 motif. A coiled-coil region spans residues D198–Q227. A G4 motif region spans residues N219–D222. K220 provides a ligand contact to ATP. Position 243 (I243) is a region of interest, G5 motif. Residue W258 participates in ATP binding. 2 positions are modified to phosphoserine: S355 and S456. Residues D444–R532 form the EH domain. The EF-hand domain maps to L476–K511. The Ca(2+) site is built by D489, D491, D493, and E500.

This sequence belongs to the TRAFAC class dynamin-like GTPase superfamily. Dynamin/Fzo/YdjA family. EHD subfamily. As to quaternary structure, homooligomer, and heterooligomer with EHD2, EHD3 and EHD4, ATP-binding is required for heterooligomerization. Interacts (via EH domain) with MICALL1 (via NPF1 motif); the interaction is direct and recruits EHD1 to membranes. Interacts with RAB35; the interaction is indirect through MICALL1 and recruits EHD1 to membranes. Interacts (via EH domain) with PACSIN2 (via NPF motifs); regulates localization to tubular recycling endosome membranes. Interacts with PACSIN1. Interacts with RAB8A. Interacts with FER1L5 (via second C2 domain). Interacts with MYOF. Interacts with ZFYVE20. Interacts (via EH domain) with RAB11FIP2.

It localises to the recycling endosome membrane. It is found in the early endosome membrane. The protein localises to the cell membrane. The protein resides in the cell projection. Its subcellular location is the cilium membrane. Its function is as follows. ATP- and membrane-binding protein that controls membrane reorganization/tubulation upon ATP hydrolysis. Acts in early endocytic membrane fusion and membrane trafficking of recycling endosomes. Recruited to endosomal membranes upon nerve growth factor stimulation, indirectly regulates neurite outgrowth. Plays a role in myoblast fusion. Involved in the unidirectional retrograde dendritic transport of endocytosed BACE1 and in efficient sorting of BACE1 to axons implicating a function in neuronal APP processing. Plays a role in the formation of the ciliary vesicle (CV), an early step in cilium biogenesis. Proposed to be required for the fusion of distal appendage vesicles (DAVs) to form the CV by recruiting SNARE complex component SNAP29. Is required for recruitment of transition zone proteins CEP290, RPGRIP1L, TMEM67 and B9D2, and of IFT20 following DAV reorganization before Rab8-dependent ciliary membrane extension. Required for the loss of CCP110 form the mother centriole essential for the maturation of the basal body during ciliogenesis. The polypeptide is EH domain-containing protein 1 (Pongo abelii (Sumatran orangutan)).